The following is a 105-amino-acid chain: Type VII secretion system extracellular protein D (105 aa).

Forms heterodimers with EsxB.

The protein resides in the secreted. The protein is Type VII secretion system extracellular protein D of Staphylococcus aureus (strain USA300).